A 622-amino-acid polypeptide reads, in one-letter code: Cytochrome c oxidase subunit 1 (622 aa).

Residues 1-27 (MLNALTEKRTRGSMLWDYLTTVDHKKI) lie on the Extracellular side of the membrane. A helical transmembrane segment spans residues 28-46 (AILYLVAGGFFFLVGGIEA). Residues 47-68 (MFIRIQLAKPENAFLSAQAYNE) lie on the Cytoplasmic side of the membrane. The helical transmembrane segment at 69-88 (VMTMHGTTMIFLAAMPLLFA) threads the bilayer. Fe(II)-heme a is bound at residue histidine 73. The Extracellular segment spans residues 89 to 110 (LMNAVVPLQIGARDVSFPFLNA). A helical transmembrane segment spans residues 111 to 128 (LGFWLFFFGGIFLNLSWF). Residues 129–159 (LGGAPDAGWTSYASLSLHSKGHGIDFFVLGL) lie on the Cytoplasmic side of the membrane. Residues 160–178 (QISGLGTLIAGINFLATII) form a helical membrane-spanning segment. At 179-196 (NMRAPGMTYMRLPLFTWT) the chain is on the extracellular side. The helical transmembrane segment at 197 to 215 (TFVASALILFAFPPLTVGL) threads the bilayer. Topologically, residues 216–241 (ALMMLDRLFGTNFFNPELGGNTVIWE) are cytoplasmic. The chain crosses the membrane as a helical span at residues 242–261 (HLFWIFGHPEVYILILPAFG). Histidine 249 and tyrosine 253 together coordinate Cu cation. Residues 249 to 253 (HPEVY) constitute a cross-link (1'-histidyl-3'-tyrosine (His-Tyr)). Residues 262-284 (IFSEVIPVFARKRLFGYSSMVFA) are Extracellular-facing. Residues 285-304 (IVLIGFLGFMVWVHHMFTTG) form a helical membrane-spanning segment. Residues histidine 298 and histidine 299 each contribute to the Cu cation site. Topologically, residues 305–312 (LGPIANAI) are cytoplasmic. The helical transmembrane segment at 313–331 (FAVATMAIAIPTGIKIFNW) threads the bilayer. The Extracellular portion of the chain corresponds to 332–346 (LLTIWGGNVKYTTAM). Residues 347–366 (LYAVSFIPSFVLGGVTGVML) form a helical membrane-spanning segment. Residues 367 to 374 (AAAAADYQ) are Cytoplasmic-facing. Residues 375 to 394 (FHDTYFVVAHFHYVIIGGVV) traverse the membrane as a helical segment. Histidine 384 provides a ligand contact to heme a3. Histidine 386 is a binding site for Fe(II)-heme a. The Extracellular portion of the chain corresponds to 395-421 (FGLLAGVHFWWPKMFGKILHETMGKIS). A helical transmembrane segment spans residues 422–441 (FVLFFIGFHLTFFIQHFVGL). At 442–459 (MGMPRRVYTFLPGQGLET) the chain is on the cytoplasmic side. A helical transmembrane segment spans residues 460-479 (GNLISTIGAFFMAAAVILLL). Residues 480-552 (VNVIWTSVKG…EPVDDIHMPN (73 aa)) lie on the Extracellular side of the membrane. Residues 553–572 (GSILPLIISFGLFVAAFGLL) form a helical membrane-spanning segment. The Cytoplasmic segment spans residues 573–580 (YRSDYAWG). Residues 581–604 (LPVIFIGLGITFITMLLRSVIDDH) form a helical membrane-spanning segment. Topologically, residues 605–622 (GYHIHKEELPNDDKGVKA) are cytoplasmic.

The protein belongs to the heme-copper respiratory oxidase family. The cofactor is Cu(2+). Heme serves as cofactor.

Its subcellular location is the cell membrane. It carries out the reaction 4 Fe(II)-[cytochrome c] + O2 + 8 H(+)(in) = 4 Fe(III)-[cytochrome c] + 2 H2O + 4 H(+)(out). It functions in the pathway energy metabolism; oxidative phosphorylation. Functionally, cytochrome c oxidase is the component of the respiratory chain that catalyzes the reduction of oxygen to water. Subunits 1-3 form the functional core of the enzyme complex. Co I is the catalytic subunit of the enzyme. Electrons originating in cytochrome c are transferred via the copper A center of subunit 2 and heme a of subunit 1 to the bimetallic center formed by heme a3 and copper B. This cytochrome c oxidase shows proton pump activity across the membrane in addition to the electron transfer. This is Cytochrome c oxidase subunit 1 (ctaD) from Bacillus subtilis (strain 168).